Reading from the N-terminus, the 143-residue chain is ATP synthase subunit b' (143 aa).

The helical transmembrane segment at 6–26 threads the bilayer; it reads ATLPLMALQFVVLAFLLNAIF.

This sequence belongs to the ATPase B chain family. As to quaternary structure, F-type ATPases have 2 components, F(1) - the catalytic core - and F(0) - the membrane proton channel. F(1) has five subunits: alpha(3), beta(3), gamma(1), delta(1), epsilon(1). F(0) has four main subunits: a(1), b(1), b'(1) and c(10-14). The alpha and beta chains form an alternating ring which encloses part of the gamma chain. F(1) is attached to F(0) by a central stalk formed by the gamma and epsilon chains, while a peripheral stalk is formed by the delta, b and b' chains.

It localises to the cellular thylakoid membrane. Functionally, f(1)F(0) ATP synthase produces ATP from ADP in the presence of a proton or sodium gradient. F-type ATPases consist of two structural domains, F(1) containing the extramembraneous catalytic core and F(0) containing the membrane proton channel, linked together by a central stalk and a peripheral stalk. During catalysis, ATP synthesis in the catalytic domain of F(1) is coupled via a rotary mechanism of the central stalk subunits to proton translocation. Component of the F(0) channel, it forms part of the peripheral stalk, linking F(1) to F(0). The b'-subunit is a diverged and duplicated form of b found in plants and photosynthetic bacteria. This is ATP synthase subunit b' from Synechocystis sp. (strain ATCC 27184 / PCC 6803 / Kazusa).